Reading from the N-terminus, the 576-residue chain is Arginine--tRNA ligase (576 aa).

The 'HIGH' region signature appears at 122–132 (PNVAKEMHVGH).

The protein belongs to the class-I aminoacyl-tRNA synthetase family. As to quaternary structure, monomer.

The protein localises to the cytoplasm. It carries out the reaction tRNA(Arg) + L-arginine + ATP = L-arginyl-tRNA(Arg) + AMP + diphosphate. This Serratia proteamaculans (strain 568) protein is Arginine--tRNA ligase.